Reading from the N-terminus, the 277-residue chain is Thymidylate synthase (277 aa).

A dUMP-binding site is contributed by R21. H51 provides a ligand contact to (6R)-5,10-methylene-5,6,7,8-tetrahydrofolate. A dUMP-binding site is contributed by 126–127 (RR). The active-site Nucleophile is C159. Residues 179-182 (RSAD), N190, and 220-222 (HLY) each bind dUMP. Residue D182 participates in (6R)-5,10-methylene-5,6,7,8-tetrahydrofolate binding. A276 contributes to the (6R)-5,10-methylene-5,6,7,8-tetrahydrofolate binding site.

Belongs to the thymidylate synthase family. Bacterial-type ThyA subfamily. In terms of assembly, homodimer.

The protein localises to the cytoplasm. The catalysed reaction is dUMP + (6R)-5,10-methylene-5,6,7,8-tetrahydrofolate = 7,8-dihydrofolate + dTMP. It functions in the pathway pyrimidine metabolism; dTTP biosynthesis. Catalyzes the reductive methylation of 2'-deoxyuridine-5'-monophosphate (dUMP) to 2'-deoxythymidine-5'-monophosphate (dTMP) while utilizing 5,10-methylenetetrahydrofolate (mTHF) as the methyl donor and reductant in the reaction, yielding dihydrofolate (DHF) as a by-product. This enzymatic reaction provides an intracellular de novo source of dTMP, an essential precursor for DNA biosynthesis. This Thioalkalivibrio sulfidiphilus (strain HL-EbGR7) protein is Thymidylate synthase.